A 97-amino-acid chain; its full sequence is Aspartyl/glutamyl-tRNA(Asn/Gln) amidotransferase subunit C (97 aa).

The protein belongs to the GatC family. As to quaternary structure, heterotrimer of A, B and C subunits.

It catalyses the reaction L-glutamyl-tRNA(Gln) + L-glutamine + ATP + H2O = L-glutaminyl-tRNA(Gln) + L-glutamate + ADP + phosphate + H(+). The enzyme catalyses L-aspartyl-tRNA(Asn) + L-glutamine + ATP + H2O = L-asparaginyl-tRNA(Asn) + L-glutamate + ADP + phosphate + 2 H(+). Allows the formation of correctly charged Asn-tRNA(Asn) or Gln-tRNA(Gln) through the transamidation of misacylated Asp-tRNA(Asn) or Glu-tRNA(Gln) in organisms which lack either or both of asparaginyl-tRNA or glutaminyl-tRNA synthetases. The reaction takes place in the presence of glutamine and ATP through an activated phospho-Asp-tRNA(Asn) or phospho-Glu-tRNA(Gln). The chain is Aspartyl/glutamyl-tRNA(Asn/Gln) amidotransferase subunit C from Cyanothece sp. (strain PCC 7425 / ATCC 29141).